We begin with the raw amino-acid sequence, 425 residues long: Spermatogenesis- and oogenesis-specific basic helix-loop-helix-containing protein 2 (425 aa).

The bHLH domain occupies 201 to 252; it reads KISLLHSSKEKLRRERIKYCCEQLRTLLPYVKGRKNDAASVLEATVDYVKYI.

As to quaternary structure, forms both hetero- and homodimers with SOHLH1.

Its subcellular location is the nucleus. The protein localises to the cytoplasm. In terms of biological role, transcription regulator of both male and female germline differentiation. Suppresses genes involved in spermatogonial stem cells maintenance, and induces genes important for spermatogonial differentiation. Coordinates oocyte differentiation without affecting meiosis I. The sequence is that of Spermatogenesis- and oogenesis-specific basic helix-loop-helix-containing protein 2 (SOHLH2) from Homo sapiens (Human).